We begin with the raw amino-acid sequence, 484 residues long: PTS system N-acetylmuramic acid-specific EIIBC component (484 aa).

Positions Met1–Gly89 constitute a PTS EIIB type-1 domain. Residue Cys28 is the Phosphocysteine intermediate; for EIIB activity of the active site. In terms of domain architecture, PTS EIIC type-1 spans Ser125–Ser484. The next 10 helical transmembrane spans lie at Phe127–Phe147, Leu168–Gly188, Ala194–Asn214, Phe228–Ile248, Met266–Met286, Ala310–Val330, Leu345–Phe365, Gly379–Pro399, Ile409–Gly429, and Ile451–Leu471.

It localises to the cell inner membrane. The catalysed reaction is N-acetyl-beta-D-muramate(out) + N(pros)-phospho-L-histidyl-[protein] = N-acetyl-beta-D-muramate 6-phosphate(in) + L-histidyl-[protein]. In terms of biological role, the phosphoenolpyruvate-dependent sugar phosphotransferase system (sugar PTS), a major carbohydrate active transport system, catalyzes the phosphorylation of incoming sugar substrates concomitantly with their translocation across the cell membrane. This system is involved in N-acetylmuramic acid (MurNAc) transport, yielding cytoplasmic MurNAc-6-P. Is also able to take up anhydro-N-acetylmuramic acid (anhMurNAc), but cannot phosphorylate the carbon 6, probably because of the 1,6-anhydro ring. The polypeptide is PTS system N-acetylmuramic acid-specific EIIBC component (murP) (Vibrio parahaemolyticus serotype O3:K6 (strain RIMD 2210633)).